The primary structure comprises 130 residues: MRRYLLPRQLRIRRRVEFTACYERGRRYHTEHFLVFVLPRACPGLRARTGMAVSRKVGKAVVRNRVKRLLREFYRLHREELPVEADIVTVAKKHAGEAALDYARVAAELLPLLRRMARHLPGSSALDGLP.

The protein belongs to the RnpA family. Consists of a catalytic RNA component (M1 or rnpB) and a protein subunit.

The enzyme catalyses Endonucleolytic cleavage of RNA, removing 5'-extranucleotides from tRNA precursor.. In terms of biological role, RNaseP catalyzes the removal of the 5'-leader sequence from pre-tRNA to produce the mature 5'-terminus. It can also cleave other RNA substrates such as 4.5S RNA. The protein component plays an auxiliary but essential role in vivo by binding to the 5'-leader sequence and broadening the substrate specificity of the ribozyme. This Desulfovibrio desulfuricans (strain ATCC 27774 / DSM 6949 / MB) protein is Ribonuclease P protein component.